Reading from the N-terminus, the 1563-residue chain is Ribulose bisphosphate carboxylase (1563 aa).

Residues histidine 32 and serine 79 each contribute to the substrate site. A propeptide spans 197 to 217 (LAAAFVGASTTRKASSVARRA) (linker). Asparagine 328 serves as a coordination point for substrate. Lysine 383 functions as the Proton acceptor in the catalytic mechanism. A substrate-binding site is contributed by lysine 385. Mg(2+) is bound by residues lysine 408, aspartate 410, and glutamate 411. Lysine 408 is subject to N6-carboxylysine. Histidine 504 functions as the Proton acceptor in the catalytic mechanism. Substrate contacts are provided by arginine 505, histidine 538, and serine 585. The propeptide at 703–723 (LAAAFVGASTTRKASSVARRA) is linker. Asparagine 834 serves as a coordination point for substrate. Lysine 889 (proton acceptor) is an active-site residue. Lysine 891 lines the substrate pocket. Mg(2+) is bound by residues lysine 914, aspartate 916, and glutamate 917. Lysine 914 bears the N6-carboxylysine mark. Histidine 1010 acts as the Proton acceptor in catalysis. Substrate is bound by residues arginine 1011, histidine 1044, and serine 1091. The propeptide at 1209-1229 (LAAAFVGASTTRKASSVARRA) is linker. Substrate is bound at residue asparagine 1340. The active-site Proton acceptor is lysine 1395. Position 1397 (lysine 1397) interacts with substrate. Residues lysine 1420, aspartate 1422, and glutamate 1423 each coordinate Mg(2+). At lysine 1420 the chain carries N6-carboxylysine. Histidine 1516 serves as the catalytic Proton acceptor. 2 residues coordinate substrate: arginine 1517 and histidine 1550.

The protein belongs to the RuBisCO large chain family. Type II subfamily. Homodimer. Requires Mg(2+) as cofactor. Post-translationally, in Western blots an approximately 220 kDa polyprotein and 2 smaller proteins of about 55 and 52 kDa are detected, suggesting the polyprotein may be cleaved at one end of the linker and then at the other end to give mature RuBisCO.

It localises to the plastid. It is found in the chloroplast. It carries out the reaction 2 (2R)-3-phosphoglycerate + 2 H(+) = D-ribulose 1,5-bisphosphate + CO2 + H2O. The catalysed reaction is D-ribulose 1,5-bisphosphate + O2 = 2-phosphoglycolate + (2R)-3-phosphoglycerate + 2 H(+). Functionally, ruBisCO catalyzes two reactions: the carboxylation of D-ribulose 1,5-bisphosphate, the primary event in carbon dioxide fixation, as well as the oxidative fragmentation of the pentose substrate. Both reactions occur simultaneously and in competition at the same active site. This chain is Ribulose bisphosphate carboxylase (rbcL), found in Prorocentrum minimum (Dinoflagellate).